The following is an 89-amino-acid chain: MRLLLILLLLTPVILAGSLDEEPNNADGANAASFTADQEGRHKRSLDVVLKEDGCPKYCSSDSDCCIRDRCLYIPQTGKQECMYKGPFL.

Residues Met1–Glu21 form the signal peptide. Positions Glu22–His42 are disordered. A propeptide spanning residues Glu22 to Arg44 is cleaved from the precursor.

In terms of processing, contains 3 disulfide bonds. As to expression, expressed by the venom duct.

The protein localises to the secreted. This Terebra anilis (Auger snail) protein is Teretoxin Tan6.8.